A 296-amino-acid chain; its full sequence is NAD kinase (296 aa).

The active-site Proton acceptor is the D72. Residues 72–73, 146–147, R157, K174, D176, 187–192, and Q247 each bind NAD(+); these read DG, ND, and TAYALS.

Belongs to the NAD kinase family. A divalent metal cation is required as a cofactor.

The protein resides in the cytoplasm. The catalysed reaction is NAD(+) + ATP = ADP + NADP(+) + H(+). Involved in the regulation of the intracellular balance of NAD and NADP, and is a key enzyme in the biosynthesis of NADP. Catalyzes specifically the phosphorylation on 2'-hydroxyl of the adenosine moiety of NAD to yield NADP. In Pseudomonas entomophila (strain L48), this protein is NAD kinase.